The chain runs to 320 residues: Cytochrome f (320 aa).

The N-terminal stretch at 1–35 (MQTRNTFSWIKEEITRSISVSLMIYIITGASISNA) is a signal peptide. 4 residues coordinate heme: Tyr-36, Cys-56, Cys-59, and His-60. Residues 286–306 (VQGLLFFLASIVFAQIFLVLK) traverse the membrane as a helical segment.

It belongs to the cytochrome f family. The 4 large subunits of the cytochrome b6-f complex are cytochrome b6, subunit IV (17 kDa polypeptide, petD), cytochrome f and the Rieske protein, while the 4 small subunits are PetG, PetL, PetM and PetN. The complex functions as a dimer. Heme is required as a cofactor.

The protein localises to the plastid. It is found in the chloroplast thylakoid membrane. Its function is as follows. Component of the cytochrome b6-f complex, which mediates electron transfer between photosystem II (PSII) and photosystem I (PSI), cyclic electron flow around PSI, and state transitions. This is Cytochrome f from Gossypium barbadense (Sea Island cotton).